The chain runs to 282 residues: NADPH-dependent 7-cyano-7-deazaguanine reductase (282 aa).

88–90 provides a ligand contact to substrate; it reads IES. 90–91 contacts NADPH; the sequence is SK. The active-site Thioimide intermediate is the Cys-190. The active-site Proton donor is the Asp-197. 229–230 contributes to the substrate binding site; sequence HE. 258–259 contributes to the NADPH binding site; that stretch reads RG.

It belongs to the GTP cyclohydrolase I family. QueF type 2 subfamily. As to quaternary structure, homodimer.

It is found in the cytoplasm. It carries out the reaction 7-aminomethyl-7-carbaguanine + 2 NADP(+) = 7-cyano-7-deazaguanine + 2 NADPH + 3 H(+). It functions in the pathway tRNA modification; tRNA-queuosine biosynthesis. Functionally, catalyzes the NADPH-dependent reduction of 7-cyano-7-deazaguanine (preQ0) to 7-aminomethyl-7-deazaguanine (preQ1). In Escherichia coli O139:H28 (strain E24377A / ETEC), this protein is NADPH-dependent 7-cyano-7-deazaguanine reductase.